A 403-amino-acid polypeptide reads, in one-letter code: Mitochondrial intermembrane space import and assembly protein 40 (403 aa).

The N-terminal 31 residues, 1-31, are a transit peptide targeting the mitochondrion; it reads MLRNLVVRNACRNRPSIQVARGLCRHQTRRL. The Mitochondrial matrix segment spans residues 33 to 46; that stretch reads ASSPQFGRNSNQEK. A helical; Signal-anchor for type II membrane protein transmembrane segment spans residues 47–66; that stretch reads TAGFIMGILSMAGALYFIAP. The Mitochondrial intermembrane segment spans residues 67–403; it reads NRKPLFASRK…KEPLNEESKP (337 aa). Basic and acidic residues-rich tracts occupy residues 75-84, 101-118, 147-168, 206-230, and 262-271; these read RKVESDKTAE, NNSKSDENGDDNDSKNDE, EDNKSSEDKDTDESKVSTKDDE, SEKKDPEHSDDEKSQQGQSDDKTTT, and EELRKQEEKQ. The interval 75–292 is disordered; that stretch reads RKVESDKTAE…GAYNPDTGEI (218 aa). Intrachain disulfides connect Cys-296–Cys-298, Cys-307–Cys-340, and Cys-317–Cys-330. A CHCH domain is found at 304–348; it reads HGPCGEEFKSAFSCFVYSEAEPKGIDCVEKFQHMQDCFRKYPEHY. 2 consecutive short sequence motifs (cx9C motif) follow at residues 307–317 and 330–340; these read CGEEFKSAFSC and CVEKFQHMQDC. A disordered region spans residues 351–403; sequence QLKETSDDEEPQDKVKVNTIESAPNVSSAKENAAKKAEQSDVKKEPLNEESKP. Positions 369-378 are enriched in polar residues; that stretch reads TIESAPNVSS. The span at 382–403 shows a compositional bias: basic and acidic residues; that stretch reads NAAKKAEQSDVKKEPLNEESKP.

In terms of assembly, monomer. Interacts with the FAD-linked sulfhydryl oxidase ERV1 and with the substrate proteins COX17, TIM9, and TIM13, forming transient intermolecular disulfide bridges. Interacts with FCJ1. It depends on Cu(2+) as a cofactor. Requires Zn(2+) as cofactor.

The protein resides in the mitochondrion inner membrane. In terms of biological role, required for the import and folding of small cysteine-containing proteins (small Tim) in the mitochondrial intermembrane space (IMS). Forms a redox cycle with ERV1 that involves a disulfide relay system. Precursor proteins to be imported into the IMS are translocated in their reduced form into the mitochondria. The oxidized form of MIA40 forms a transient intermolecular disulfide bridge with the reduced precursor protein, resulting in oxidation of the precursor protein that now contains an intramolecular disulfide bond and is able to undergo folding in the IMS. Reduced MIA40 is reoxidized by FAD-linked sulfhydryl oxidase ERV1. This is Mitochondrial intermembrane space import and assembly protein 40 (MIA40) from Saccharomyces cerevisiae (strain ATCC 204508 / S288c) (Baker's yeast).